Consider the following 319-residue polypeptide: D-alanine--D-alanine ligase (319 aa).

The segment at 1 to 23 (MTGPEWAHTRGTKVGQSSRTPPK) is disordered. The region spanning 120–313 (KDAFVAAGLP…FGKLCAWMVE (194 aa)) is the ATP-grasp domain. 147–197 (MQPPYVVKPNNEGSSVGVYLVHEAANGPPQLSEDMPQEVMVEAFAPGRELT) is an ATP binding site. The Mg(2+) site is built by D264, E280, and N282.

The protein belongs to the D-alanine--D-alanine ligase family. Requires Mg(2+) as cofactor. It depends on Mn(2+) as a cofactor.

Its subcellular location is the cytoplasm. The enzyme catalyses 2 D-alanine + ATP = D-alanyl-D-alanine + ADP + phosphate + H(+). It functions in the pathway cell wall biogenesis; peptidoglycan biosynthesis. Its function is as follows. Cell wall formation. In Roseobacter denitrificans (strain ATCC 33942 / OCh 114) (Erythrobacter sp. (strain OCh 114)), this protein is D-alanine--D-alanine ligase.